We begin with the raw amino-acid sequence, 207 residues long: Outer-membrane lipoprotein carrier protein (207 aa).

Positions 1 to 21 (MRAIRMLLVSALTLGSVTAYA) are cleaved as a signal peptide.

This sequence belongs to the LolA family. In terms of assembly, monomer.

It localises to the periplasm. Its function is as follows. Participates in the translocation of lipoproteins from the inner membrane to the outer membrane. Only forms a complex with a lipoprotein if the residue after the N-terminal Cys is not an aspartate (The Asp acts as a targeting signal to indicate that the lipoprotein should stay in the inner membrane). This is Outer-membrane lipoprotein carrier protein from Pseudomonas putida (strain ATCC 47054 / DSM 6125 / CFBP 8728 / NCIMB 11950 / KT2440).